The primary structure comprises 200 residues: Exopolysaccharide production protein PSS (200 aa).

The protein belongs to the bacterial sugar transferase family.

The chain is Exopolysaccharide production protein PSS (pss) from Rhizobium leguminosarum bv. phaseoli.